The chain runs to 248 residues: 2,3-bisphosphoglycerate-dependent phosphoglycerate mutase (248 aa).

Residues arginine 8–asparagine 15, threonine 21–glycine 22, arginine 60, glutamate 87–tyrosine 90, lysine 98, arginine 114–arginine 115, and glycine 183–asparagine 184 each bind substrate. Histidine 9 (tele-phosphohistidine intermediate) is an active-site residue. Catalysis depends on glutamate 87, which acts as the Proton donor/acceptor.

Belongs to the phosphoglycerate mutase family. BPG-dependent PGAM subfamily. In terms of assembly, homodimer.

It catalyses the reaction (2R)-2-phosphoglycerate = (2R)-3-phosphoglycerate. The protein operates within carbohydrate degradation; glycolysis; pyruvate from D-glyceraldehyde 3-phosphate: step 3/5. Functionally, catalyzes the interconversion of 2-phosphoglycerate and 3-phosphoglycerate. The sequence is that of 2,3-bisphosphoglycerate-dependent phosphoglycerate mutase from Teredinibacter turnerae (strain ATCC 39867 / T7901).